A 388-amino-acid polypeptide reads, in one-letter code: Pregnancy-associated glycoprotein (388 aa).

The first 15 residues, 1 to 15 (MKWFGVLGLVTLSEC), serve as a signal peptide directing secretion. A Peptidase A1 domain is found at 74 to 385 (YMGIISVGTP…DRENDRIGLA (312 aa)). D92 is an active-site residue. 2 cysteine pairs are disulfide-bonded: C105-C110 and C266-C270. Residue D275 is part of the active site. An intrachain disulfide couples C309 to C344. N-linked (GlcNAc...) asparagine glycosylation is present at N356.

It belongs to the peptidase A1 family. In terms of tissue distribution, trophoblast and placental tissue.

It localises to the secreted. Its subcellular location is the extracellular space. In Equus caballus (Horse), this protein is Pregnancy-associated glycoprotein (PAG).